Here is a 712-residue protein sequence, read N- to C-terminus: Polyribonucleotide nucleotidyltransferase (712 aa).

D487 and D493 together coordinate Mg(2+). The KH domain maps to 554 to 613 (PKIITMTINPDKIRDVIGPSGKQINKIIEETGVKIDIEQDGTVFISSINQEMNDKAKKII). The S1 motif domain maps to 623-691 (GEIYEGKVKR…KQGRVNLSRK (69 aa)).

The protein belongs to the polyribonucleotide nucleotidyltransferase family. Mg(2+) serves as cofactor.

The protein resides in the cytoplasm. The catalysed reaction is RNA(n+1) + phosphate = RNA(n) + a ribonucleoside 5'-diphosphate. Its function is as follows. Involved in mRNA degradation. Catalyzes the phosphorolysis of single-stranded polyribonucleotides processively in the 3'- to 5'-direction. The chain is Polyribonucleotide nucleotidyltransferase from Bacillus cereus (strain G9842).